The primary structure comprises 1363 residues: Vascular endothelial growth factor receptor 3 (1363 aa).

The N-terminal stretch at 1–24 (MQPGAALNRRLWLCLGLLQGLANG) is a signal peptide. The Extracellular segment spans residues 25 to 775 (YSMTPPTLNI…EGSEDKGSME (751 aa)). N-linked (GlcNAc...) asparagine glycosylation is found at Asn-33, Asn-104, Asn-166, Asn-251, Asn-299, and Asn-411. 7 consecutive Ig-like C2-type domains span residues 44 to 118 (GDSL…YIKA), 151 to 213 (KDSM…WGDQ), 230 to 326 (YDIQ…TEVI), 331 to 415 (PFIS…ISLE), 422 to 552 (PHIH…FYVT), 555 to 671 (PDGF…KYLS), and 678 to 764 (PRLT…ASVA). Cystine bridges form between Cys-51-Cys-111 and Cys-158-Cys-206. Cys-252 and Cys-310 form a disulfide bridge. 3 disulfides stabilise this stretch: Cys-445–Cys-534, Cys-466–Cys-486, and Cys-578–Cys-653. N-linked (GlcNAc...) asparagine glycosylation is found at Asn-515, Asn-527, Asn-582, Asn-594, and Asn-683. Cys-699 and Cys-751 are disulfide-bonded. N-linked (GlcNAc...) asparagine glycosylation is present at Asn-758. The helical transmembrane segment at 776–796 (IVILIGTGVIAVFFWVLLLLI) threads the bilayer. Over 797–1363 (FCNMKRPAHA…GSTFFADSNY (567 aa)) the chain is Cytoplasmic. A phosphotyrosine; by SRC mark is found at Tyr-830 and Tyr-833. The 329-residue stretch at 845-1173 (LHLGRVLGHG…DLVEILGDLL (329 aa)) folds into the Protein kinase domain. Residues 851-859 (LGHGAFGKV) and Lys-879 contribute to the ATP site. The Proton acceptor role is filled by Asp-1037. Position 1063 is a phosphotyrosine; by autocatalysis and SRC (Tyr-1063). Residues Tyr-1068, Tyr-1230, Tyr-1231, and Tyr-1265 each carry the phosphotyrosine; by autocatalysis modification. The segment covering 1289–1317 (SRHRQEGSFSRKDPGQHMDISRGHPDLQG) has biased composition (basic and acidic residues). The disordered stretch occupies residues 1289 to 1330 (SRHRQEGSFSRKDPGQHMDISRGHPDLQGRRRRPTQGAQGGK). Tyr-1333 and Tyr-1337 each carry phosphotyrosine; by autocatalysis and SRC. Tyr-1363 is subject to Phosphotyrosine; by autocatalysis.

The protein belongs to the protein kinase superfamily. Tyr protein kinase family. CSF-1/PDGF receptor subfamily. In terms of assembly, interacts with VEGFC and VEGFD. Monomer in the absence of bound VEGFC or VEGFD. Homodimer in the presence of bound VEGFC or VEGFD. Can also form a heterodimer with KDR. Interacts with PTPN14; the interaction is enhanced by stimulation with VEGFC. Interacts with CRK, GRB2, PTK2/FAK1, SHC1, PIK3R1 and PTPN11/SHP-2. Identified in a complex with SRC and ITGB1. Identified in a complex with SRC and ITGB1. Post-translationally, autophosphorylated on tyrosine residues upon ligand binding. Autophosphorylation occurs in trans, i.e. one subunit of the dimeric receptor phosphorylates tyrosine residues on the other subunit. Phosphorylation in response to H(2)O(2) is mediated by a process that requires SRC and PRKCD activity. Phosphorylation at Tyr-1068 is required for autophosphorylation at additional tyrosine residues. Phosphorylation at Tyr-1063 and Tyr-1337 is important for interaction with CRK and subsequent activation of MAPK8. Phosphorylation at Tyr-1230, Tyr-1231 and Tyr-1337 is important for interaction with GRB2 and subsequent activation of the AKT1 and MAPK1/ERK2 and/or MAPK3/ERK1 signaling pathways. In response to endothelial cell adhesion onto collagen, can also be phosphorylated in the absence of FLT4 kinase activity by SRC.

It is found in the cell membrane. The protein resides in the cytoplasm. The protein localises to the nucleus. The enzyme catalyses L-tyrosyl-[protein] + ATP = O-phospho-L-tyrosyl-[protein] + ADP + H(+). Present in an inactive conformation in the absence of bound ligand. Binding of VEGFC or VEGFD leads to dimerization and activation by autophosphorylation on tyrosine residues. Its function is as follows. Tyrosine-protein kinase that acts as a cell-surface receptor for VEGFC and VEGFD, and plays an essential role in adult lymphangiogenesis and in the development of the vascular network and the cardiovascular system during embryonic development. Promotes proliferation, survival and migration of endothelial cells, and regulates angiogenic sprouting. Signaling by activated FLT4 leads to enhanced production of VEGFC, and to a lesser degree VEGFA, thereby creating a positive feedback loop that enhances FLT4 signaling. Modulates KDR signaling by forming heterodimers. Mediates activation of the MAPK1/ERK2, MAPK3/ERK1 signaling pathway, of MAPK8 and the JUN signaling pathway, and of the AKT1 signaling pathway. Phosphorylates SHC1. Mediates phosphorylation of PIK3R1, the regulatory subunit of phosphatidylinositol 3-kinase. Promotes phosphorylation of MAPK8 at 'Thr-183' and 'Tyr-185', and of AKT1 at 'Ser-473'. This is Vascular endothelial growth factor receptor 3 (Flt4) from Rattus norvegicus (Rat).